Consider the following 104-residue polypeptide: Large ribosomal subunit protein uL23 (104 aa).

This sequence belongs to the universal ribosomal protein uL23 family. As to quaternary structure, part of the 50S ribosomal subunit. Contacts protein L29, and trigger factor when it is bound to the ribosome.

Functionally, one of the early assembly proteins it binds 23S rRNA. One of the proteins that surrounds the polypeptide exit tunnel on the outside of the ribosome. Forms the main docking site for trigger factor binding to the ribosome. The chain is Large ribosomal subunit protein uL23 from Trichormus variabilis (strain ATCC 29413 / PCC 7937) (Anabaena variabilis).